The chain runs to 123 residues: Basic phospholipase A2 Ph-TX1 (123 aa).

Tyr-27, Gly-29, and Gly-31 together coordinate Ca(2+). 6 cysteine pairs are disulfide-bonded: Cys-28–Cys-45, Cys-44–Cys-96, Cys-50–Cys-123, Cys-51–Cys-89, Cys-59–Cys-83, and Cys-77–Cys-87. Residue His-48 is part of the active site. Asp-49 serves as a coordination point for Ca(2+). The active site involves Asp-90.

It belongs to the phospholipase A2 family. Group II subfamily. D49 sub-subfamily. Monomer. The cofactor is Ca(2+). In terms of tissue distribution, expressed by the venom gland.

It localises to the secreted. The catalysed reaction is a 1,2-diacyl-sn-glycero-3-phosphocholine + H2O = a 1-acyl-sn-glycero-3-phosphocholine + a fatty acid + H(+). With respect to regulation, inhibited by divalent cations different from calcium ions (cadmium, magnesium, manganese, zinc), since they act as competitive antagonists of this cofactor. In terms of biological role, snake venom phospholipase A2 (PLA2) that induces in vivo myotoxicity, moderates footpad edema, and causes in vitro neuromuscular blockade. PLA2 catalyzes the calcium-dependent hydrolysis of the 2-acyl groups in 3-sn-phosphoglycerides. This chain is Basic phospholipase A2 Ph-TX1, found in Bothrocophias hyoprora (Amazonian hognose viper).